The following is a 521-amino-acid chain: Feruloyl esterase B (521 aa).

The N-terminal stretch at 1–17 is a signal peptide; sequence MKVASLLSLALPGAALA. 2 disulfide bridges follow: C26-C72 and C61-C111. N-linked (GlcNAc...) asparagine glycosylation is found at N37, N51, N77, N95, N144, and N177. Cystine bridges form between C184/C438, C253/C270, and C279/C288. S185 (acyl-ester intermediate) is an active-site residue. 5 residues coordinate Ca(2+): D254, D257, A259, D261, and I263. Residues N284, N347, N352, and N378 are each glycosylated (N-linked (GlcNAc...) asparagine). Catalysis depends on charge relay system residues D397 and H437. 2 N-linked (GlcNAc...) asparagine glycosylation sites follow: N488 and N511. C498 and C520 form a disulfide bridge.

This sequence belongs to the tannase family. Homodimer. Post-translationally, glycosylated.

The protein resides in the secreted. It carries out the reaction feruloyl-polysaccharide + H2O = ferulate + polysaccharide.. With respect to regulation, inhibited by the specific serine esterase inhibitor AEBSF. Involved in degradation of plant cell walls. Hydrolyzes of the feruloyl-arabinose ester bond in arabinoxylans as well as the feruloyl-galactose and feruloyl-arabinose ester bonds in pectin. The polypeptide is Feruloyl esterase B (faeB) (Aspergillus niger).